The primary structure comprises 338 residues: Sporulation protein YdcC (338 aa).

Residues 8-25 (FVLLLTGLLAVLILSACG) traverse the membrane as a helical segment.

Its subcellular location is the cell membrane. In terms of biological role, required for efficient sporulation. The polypeptide is Sporulation protein YdcC (ydcC) (Bacillus subtilis (strain 168)).